The sequence spans 503 residues: Maturase K (503 aa).

This sequence belongs to the intron maturase 2 family. MatK subfamily.

The protein resides in the plastid. The protein localises to the chloroplast. In terms of biological role, usually encoded in the trnK tRNA gene intron. Probably assists in splicing its own and other chloroplast group II introns. The sequence is that of Maturase K from Panax quinquefolius (American ginseng).